The chain runs to 270 residues: MLITPDISALSYKRQLAKRFDRASQSYDSYADFQKVVLERLLAMLPLNQADVVLDLGTGTGQALGILSERLNPKCNIALDLSLQMLAVASERFSSLHNTHYVCADAERLPLQDRSCDLVFSSLAIQWCLSPLDLFKELYRVIKPGGYVVFSTLSQGSMPEISKAWFGLDNKEHVHQYMASDALLDSIRASELNLLSSQLSNISMWFDSPESAIYSLKKVGASLIASDGDPSVSPSKWKAFLLEYEKQRNELGIPLSYQVSFVVAQRPNSI.

Belongs to the methyltransferase superfamily.

The enzyme catalyses malonyl-[ACP] + S-adenosyl-L-methionine = malonyl-[ACP] methyl ester + S-adenosyl-L-homocysteine. The protein operates within cofactor biosynthesis; biotin biosynthesis. Functionally, converts the free carboxyl group of a malonyl-thioester to its methyl ester by transfer of a methyl group from S-adenosyl-L-methionine (SAM). It allows to synthesize pimeloyl-ACP via the fatty acid synthetic pathway. The polypeptide is Malonyl-[acyl-carrier protein] O-methyltransferase (Marinomonas sp. (strain MWYL1)).